A 951-amino-acid polypeptide reads, in one-letter code: Glycine dehydrogenase (decarboxylating) (951 aa).

At K709 the chain carries N6-(pyridoxal phosphate)lysine.

It belongs to the GcvP family. The glycine cleavage system is composed of four proteins: P, T, L and H. Requires pyridoxal 5'-phosphate as cofactor.

It catalyses the reaction N(6)-[(R)-lipoyl]-L-lysyl-[glycine-cleavage complex H protein] + glycine + H(+) = N(6)-[(R)-S(8)-aminomethyldihydrolipoyl]-L-lysyl-[glycine-cleavage complex H protein] + CO2. In terms of biological role, the glycine cleavage system catalyzes the degradation of glycine. The P protein binds the alpha-amino group of glycine through its pyridoxal phosphate cofactor; CO(2) is released and the remaining methylamine moiety is then transferred to the lipoamide cofactor of the H protein. This is Glycine dehydrogenase (decarboxylating) from Gluconobacter oxydans (strain 621H) (Gluconobacter suboxydans).